The sequence spans 243 residues: NAD-dependent protein deacetylase (243 aa).

Residues 1–243 (MKHDLETLKH…VSVVKSLMTE (243 aa)) form the Deacetylase sirtuin-type domain. Ala-24, Phe-35, Arg-36, Gln-105, Ile-107, Asp-108, and His-123 together coordinate NAD(+). Phe-35 contributes to the nicotinamide binding site. Nicotinamide is bound by residues Ile-107 and Asp-108. His-123 acts as the Proton acceptor in catalysis. Zn(2+) is bound by residues Cys-131, Cys-134, Cys-151, and Cys-154. NAD(+) is bound by residues Ser-192, Ser-193, Asn-215, and Asp-232.

Belongs to the sirtuin family. Class U subfamily. Zn(2+) is required as a cofactor.

The protein resides in the cytoplasm. The catalysed reaction is N(6)-acetyl-L-lysyl-[protein] + NAD(+) + H2O = 2''-O-acetyl-ADP-D-ribose + nicotinamide + L-lysyl-[protein]. NAD-dependent protein deacetylase which modulates the activities of several enzymes which are inactive in their acetylated form. The sequence is that of NAD-dependent protein deacetylase from Staphylococcus aureus (strain MRSA252).